Here is a 375-residue protein sequence, read N- to C-terminus: Growth/differentiation factor 8 (375 aa).

The N-terminal stretch at 1-18 (MQKLQIFVYIYLFMLTVA) is a signal peptide. Positions 19–266 (GPVDLNENSE…VTDTPKRARR (248 aa)) are excised as a propeptide. N-linked (GlcNAc...) asparagine glycosylation is found at Asn48 and Asn71. Cystine bridges form between Cys272–Cys282, Cys281–Cys340, Cys309–Cys372, and Cys313–Cys374.

Belongs to the TGF-beta family. In terms of assembly, homodimer; disulfide-linked. Interacts with WFIKKN2, leading to inhibit its activity. Interacts with FSTL3. Synthesized as large precursor molecule that undergoes proteolytic cleavage to generate an N-terminal propeptide and a disulfide linked C-terminal dimer, which is the biologically active molecule. The circulating form consists of a latent complex of the C-terminal dimer and other proteins, including its propeptide, which maintain the C-terminal dimer in a latent, inactive state. Ligand activation requires additional cleavage of the prodomain by a tolloid-like metalloproteinase.

It is found in the secreted. Acts specifically as a negative regulator of skeletal muscle growth. The protein is Growth/differentiation factor 8 (MSTN) of Sylvicapra grimmia (Grey duiker).